Consider the following 300-residue polypeptide: 2-methylisocitrate lyase (300 aa).

53–55 (SGD) is a binding site for substrate. Residues D92 and D94 each coordinate Mg(2+). Residues 129-130 (CG), R162, E192, 214-216 (NMT), R245, and R274 each bind substrate.

This sequence belongs to the isocitrate lyase/PEP mutase superfamily. Methylisocitrate lyase family. Mg(2+) is required as a cofactor.

The catalysed reaction is 3-hydroxybutane-1,2,3-tricarboxylate = pyruvate + succinate. In terms of biological role, involved in the methylcitric acid cycle. Catalyzes the cleavage of 2-methylisocitrate to yield pyruvate and succinate. The protein is 2-methylisocitrate lyase of Halalkalibacterium halodurans (strain ATCC BAA-125 / DSM 18197 / FERM 7344 / JCM 9153 / C-125) (Bacillus halodurans).